An 84-amino-acid chain; its full sequence is Putative membrane protein insertion efficiency factor (84 aa).

The protein belongs to the UPF0161 family.

It is found in the cell inner membrane. In terms of biological role, could be involved in insertion of integral membrane proteins into the membrane. This Shewanella halifaxensis (strain HAW-EB4) protein is Putative membrane protein insertion efficiency factor.